The sequence spans 268 residues: UPF0294 protein ETA_26410 (268 aa).

This sequence belongs to the UPF0294 family.

Its subcellular location is the cytoplasm. The chain is UPF0294 protein ETA_26410 from Erwinia tasmaniensis (strain DSM 17950 / CFBP 7177 / CIP 109463 / NCPPB 4357 / Et1/99).